We begin with the raw amino-acid sequence, 33 residues long: Mytimycin (33 aa).

Its subcellular location is the secreted. Has antifungal activity against N.crassa and F.culmorum. This Mytilus edulis (Blue mussel) protein is Mytimycin.